The sequence spans 373 residues: NAD(P)H-quinone oxidoreductase subunit 1 (373 aa).

9 consecutive transmembrane segments (helical) span residues 29–49 (LWVP…VMVM), 64–84 (IGPN…GIKL), 98–118 (VLFT…YLVV), 129–149 (IAIG…GLLM), 177–197 (LALS…VGIV), 202–222 (GLGI…IFLI), 267–287 (LLAS…VVPV), 309–329 (VLGI…AILL), and 348–368 (FLLP…LAFP).

This sequence belongs to the complex I subunit 1 family. In terms of assembly, NDH-1 is composed of at least 11 different subunits.

It localises to the cellular thylakoid membrane. It catalyses the reaction a plastoquinone + NADH + (n+1) H(+)(in) = a plastoquinol + NAD(+) + n H(+)(out). It carries out the reaction a plastoquinone + NADPH + (n+1) H(+)(in) = a plastoquinol + NADP(+) + n H(+)(out). Its function is as follows. NDH-1 shuttles electrons from an unknown electron donor, via FMN and iron-sulfur (Fe-S) centers, to quinones in the respiratory and/or the photosynthetic chain. The immediate electron acceptor for the enzyme in this species is believed to be plastoquinone. Couples the redox reaction to proton translocation, and thus conserves the redox energy in a proton gradient. This is NAD(P)H-quinone oxidoreductase subunit 1 from Synechococcus sp. (strain JA-3-3Ab) (Cyanobacteria bacterium Yellowstone A-Prime).